The sequence spans 103 residues: Putative membrane protein insertion efficiency factor (103 aa).

The protein belongs to the UPF0161 family.

The protein resides in the cell membrane. Functionally, could be involved in insertion of integral membrane proteins into the membrane. The sequence is that of Putative membrane protein insertion efficiency factor from Clavibacter sepedonicus (Clavibacter michiganensis subsp. sepedonicus).